A 435-amino-acid chain; its full sequence is S-phase entry cyclin-5 (435 aa).

Disordered stretches follow at residues 36–70 (KRAL…NPLS) and 104–126 (NDRT…DAAS). Residues 41–52 (KNDSSSKQQVQD) show a composition bias toward low complexity. Residues 110–124 (EQEEEEEEEGEDDDA) show a composition bias toward acidic residues.

It belongs to the cyclin family. Cyclin AB subfamily.

Its function is as follows. Required for efficient progression through S phase and possibly for the normal progression through meiosis. Interacts with CDC28. This chain is S-phase entry cyclin-5 (CLB5), found in Saccharomyces cerevisiae (strain ATCC 204508 / S288c) (Baker's yeast).